The chain runs to 315 residues: GPN-loop GTPase 2 homolog (315 aa).

Residue glycine 12 to valine 17 participates in GTP binding. The Gly-Pro-Asn (GPN)-loop; involved in dimer interface signature appears at glycine 69–asparagine 71. Serine 171–aspartate 174 is a binding site for GTP.

The protein belongs to the GPN-loop GTPase family. Heterodimers with gpn1 or gpn3. Binds to RNA polymerase II (RNAPII).

In terms of biological role, small GTPase required for proper localization of RNA polymerase II and III (RNAPII and RNAPIII). May act at an RNAP assembly step prior to nuclear import. This chain is GPN-loop GTPase 2 homolog (gpn2), found in Dictyostelium discoideum (Social amoeba).